Here is a 176-residue protein sequence, read N- to C-terminus: Co-chaperone protein HscB homolog (176 aa).

The J domain occupies 8–80; that stretch reads DFFALFGLPV…LRRATYLLKL (73 aa).

It belongs to the HscB family. In terms of assembly, interacts with HscA and stimulates its ATPase activity.

In terms of biological role, co-chaperone involved in the maturation of iron-sulfur cluster-containing proteins. Seems to help targeting proteins to be folded toward HscA. The chain is Co-chaperone protein HscB homolog from Cupriavidus taiwanensis (strain DSM 17343 / BCRC 17206 / CCUG 44338 / CIP 107171 / LMG 19424 / R1) (Ralstonia taiwanensis (strain LMG 19424)).